A 303-amino-acid chain; its full sequence is Short chain dehydrogenase pigC (303 aa).

Ile45, Asp103, Asn130, Arg164, Tyr196, Lys200, and Thr231 together coordinate NADP(+). The active-site Proton donor is Tyr196. The active-site Lowers pKa of active site Tyr is Lys200.

It belongs to the short-chain dehydrogenases/reductases (SDR) family.

Its pathway is secondary metabolite biosynthesis. Its function is as follows. Short chain dehydrogenase; part of the gene cluster that mediates the biosynthesis of azaphilone pigments (MonAzPs), a complex mixture of compounds with a common azaphilone skeleton very widely used as food colorants. Within the pathway, pigC intercepts the very reactive benzaldehyde produced by the nrPKS pigA to reduce the omega-1 carbonyl to the alcohol to provide the first stable enzyme-free MonAzPs intermediate, 6-(4-hydroxy-2-oxopentyl)-3-methyl-2,4-dioxocyclohexane carbaldehyde, also known as M7PKS-1. The first step of the pathway is performed by the nrPKS pigA that forms the hexaketide precursor from successive condensations of five malonyl-CoA units, with a simple acetyl-CoA starter unit. The role of esterase pigG is not clear, but it may play at most a supplementary role in the formation of the benzaldehyde produced by the pigA nrPKS. This very reactive benzaldehyde is intercepted by the pigC ketoreductase that to provide the first stable enzyme-free MonAzPs intermediate, M7PKS-1. The FAD-dependent monooxygenase pigN hydroxylates M7PKS-1 at C-4, which triggers the formation of the pyran ring. PigJ, pigK and pigD are involved in the acetylation of the pyran ring. PigJ and pigK form the two subunits of a dedicated fungal FAS that produces the side chain fatty acyl moiety of MonAzPs and pigD transfers the fatty acyl chain to the C-4 alcohol. PigM and pigO are involved in the elimination of the omega-1 alcohol. PigM acts as an O-acetyltransferase that synthesizes the putative O-11 acetyl intermediate whereas pigO eliminates acetic acid to yield an intermediate with a C10(11) double bond. The dehydration of the C-11 alcohol followed by the reduction of the C6(7) double bond by the NAD(P)H-dependent oxidoreductase pigE increases the electrophilicity of the C-5 ketone of the resulting acyl benzopyran. This in turn sets up the C-5 ketone for an intramolecular Knoevenagel aldol condensation with the C-20 enol of the side chain. This condensation affords the characteristic linear tricyclic carbon skeletons of the yellow pigments that serve as the common precursors for the classical yellow pigments monascin and ankaflavin, orange pigments rubopunctatin and monascorubrin, and red pigments ribropunctamine and monascorubramine. The FAD-dependent oxidoreductase pigF is especially invoved in the biosynthesis of orange and red pigments via desaturation of C6(7). This chain is Short chain dehydrogenase pigC, found in Monascus ruber (Mold).